The chain runs to 255 residues: uncharacterized protein (255 aa).

2 disordered regions span residues 112-145 and 157-183; these read CWPG…PSPG and GLAE…PDAQ.

This is an uncharacterized protein from Rhodospirillum rubrum.